A 371-amino-acid polypeptide reads, in one-letter code: Bifunctional enzyme IspD/IspF (371 aa).

The 2-C-methyl-D-erythritol 4-phosphate cytidylyltransferase stretch occupies residues 1–210 (MLDISLIMLS…LNLPKPSWDI (210 aa)). The interval 211–371 (FNGNGFDVHE…NLKYFDWMKL (161 aa)) is 2-C-methyl-D-erythritol 2,4-cyclodiphosphate synthase. Asp217 and His219 together coordinate a divalent metal cation. Residues 217-219 (DVH) and 243-244 (HS) each bind 4-CDP-2-C-methyl-D-erythritol 2-phosphate. His251 serves as a coordination point for a divalent metal cation. Residues 265-267 (DIG), 270-274 (FPDND), 341-344 (TTTE), Phe348, and Arg351 each bind 4-CDP-2-C-methyl-D-erythritol 2-phosphate.

This sequence in the N-terminal section; belongs to the IspD/TarI cytidylyltransferase family. IspD subfamily. It in the C-terminal section; belongs to the IspF family. A divalent metal cation is required as a cofactor.

The catalysed reaction is 2-C-methyl-D-erythritol 4-phosphate + CTP + H(+) = 4-CDP-2-C-methyl-D-erythritol + diphosphate. It carries out the reaction 4-CDP-2-C-methyl-D-erythritol 2-phosphate = 2-C-methyl-D-erythritol 2,4-cyclic diphosphate + CMP. Its pathway is isoprenoid biosynthesis; isopentenyl diphosphate biosynthesis via DXP pathway; isopentenyl diphosphate from 1-deoxy-D-xylulose 5-phosphate: step 2/6. It functions in the pathway isoprenoid biosynthesis; isopentenyl diphosphate biosynthesis via DXP pathway; isopentenyl diphosphate from 1-deoxy-D-xylulose 5-phosphate: step 4/6. Its function is as follows. Bifunctional enzyme that catalyzes the formation of 4-diphosphocytidyl-2-C-methyl-D-erythritol from CTP and 2-C-methyl-D-erythritol 4-phosphate (MEP) (IspD), and catalyzes the conversion of 4-diphosphocytidyl-2-C-methyl-D-erythritol 2-phosphate (CDP-ME2P) to 2-C-methyl-D-erythritol 2,4-cyclodiphosphate (ME-CPP) with a corresponding release of cytidine 5-monophosphate (CMP) (IspF). The chain is Bifunctional enzyme IspD/IspF from Campylobacter lari (strain RM2100 / D67 / ATCC BAA-1060).